The chain runs to 214 residues: Probable transaldolase (214 aa).

The Schiff-base intermediate with substrate role is filled by lysine 83.

The protein belongs to the transaldolase family. Type 3B subfamily.

It is found in the cytoplasm. It carries out the reaction D-sedoheptulose 7-phosphate + D-glyceraldehyde 3-phosphate = D-erythrose 4-phosphate + beta-D-fructose 6-phosphate. It participates in carbohydrate degradation; pentose phosphate pathway; D-glyceraldehyde 3-phosphate and beta-D-fructose 6-phosphate from D-ribose 5-phosphate and D-xylulose 5-phosphate (non-oxidative stage): step 2/3. Its function is as follows. Transaldolase is important for the balance of metabolites in the pentose-phosphate pathway. In Streptococcus pyogenes serotype M2 (strain MGAS10270), this protein is Probable transaldolase.